Reading from the N-terminus, the 346-residue chain is RNA-directed DNA methylation 4 (346 aa).

An N-acetylmethionine modification is found at M1. 3 stretches are compositionally biased toward acidic residues: residues 253–268, 278–312, and 323–332; these read FCDG…EDSN, PEEE…DDEE, and GDDEFDDYAE. The interval 253 to 346 is disordered; that stretch reads FCDGSDESDY…YSESDEEFES (94 aa).

Belongs to the IWR1/SLC7A6OS family. As to quaternary structure, interacts with NRPD1. Associates with Pol II and Pol V complexes.

Its function is as follows. Probable regulatory factor for several RNA polymerases. Effector involved in facilitation of Pol V transcription as RNA scaffold and recruitment of silencing complex to target genomic sites. The protein is RNA-directed DNA methylation 4 (RDM4) of Arabidopsis thaliana (Mouse-ear cress).